The primary structure comprises 204 residues: Apoptosis regulator R11 (204 aa).

The BH1 signature appears at 101-120 (ELFRDGTNWGRIVAFFSFGR). The BH2 signature appears at 152–167 (PWMQENGGWEAFVGLY). A helical membrane pass occupies residues 181 to 198 (RFGRLLTIVMLTGVFALV).

Belongs to the Bcl-2 family.

The protein resides in the membrane. Functionally, confers strong protection against cell death. The polypeptide is Apoptosis regulator R11 (Xenopus laevis (African clawed frog)).